Here is a 515-residue protein sequence, read N- to C-terminus: Maturase K (515 aa).

This sequence belongs to the intron maturase 2 family. MatK subfamily.

It is found in the plastid. Its subcellular location is the chloroplast. Usually encoded in the trnK tRNA gene intron. Probably assists in splicing its own and other chloroplast group II introns. This chain is Maturase K, found in Pseudotsuga menziesii (Douglas-fir).